The sequence spans 424 residues: Methylenetetrahydrofolate--tRNA-(uracil-5-)-methyltransferase TrmFO 1 (424 aa).

8-13 lines the FAD pocket; sequence GAGLSG.

The protein belongs to the MnmG family. TrmFO subfamily. FAD serves as cofactor.

It localises to the cytoplasm. The catalysed reaction is uridine(54) in tRNA + (6R)-5,10-methylene-5,6,7,8-tetrahydrofolate + NADH + H(+) = 5-methyluridine(54) in tRNA + (6S)-5,6,7,8-tetrahydrofolate + NAD(+). It catalyses the reaction uridine(54) in tRNA + (6R)-5,10-methylene-5,6,7,8-tetrahydrofolate + NADPH + H(+) = 5-methyluridine(54) in tRNA + (6S)-5,6,7,8-tetrahydrofolate + NADP(+). Functionally, catalyzes the folate-dependent formation of 5-methyl-uridine at position 54 (M-5-U54) in all tRNAs. This Mycoplasma mycoides subsp. mycoides SC (strain CCUG 32753 / NCTC 10114 / PG1) protein is Methylenetetrahydrofolate--tRNA-(uracil-5-)-methyltransferase TrmFO 1.